A 563-amino-acid polypeptide reads, in one-letter code: NAD-dependent malic enzyme (563 aa).

Tyr-101 (proton donor) is an active-site residue. Arg-154 serves as a coordination point for NAD(+). Lys-172 (proton acceptor) is an active-site residue. A divalent metal cation contacts are provided by Glu-243, Asp-244, and Asp-267. NAD(+)-binding residues include Asp-267 and Asn-416.

It belongs to the malic enzymes family. As to quaternary structure, homotetramer. It depends on Mg(2+) as a cofactor. Mn(2+) is required as a cofactor.

It carries out the reaction (S)-malate + NAD(+) = pyruvate + CO2 + NADH. The enzyme catalyses oxaloacetate + H(+) = pyruvate + CO2. This is NAD-dependent malic enzyme from Pseudomonas savastanoi pv. phaseolicola (strain 1448A / Race 6) (Pseudomonas syringae pv. phaseolicola (strain 1448A / Race 6)).